Here is a 317-residue protein sequence, read N- to C-terminus: Aspartate carbamoyltransferase catalytic subunit (317 aa).

Residues Arg66 and Thr67 each coordinate carbamoyl phosphate. Lys94 contacts L-aspartate. Arg116, His144, and Gln147 together coordinate carbamoyl phosphate. The L-aspartate site is built by Arg177 and Arg231. Positions 272 and 273 each coordinate carbamoyl phosphate.

This sequence belongs to the aspartate/ornithine carbamoyltransferase superfamily. ATCase family. As to quaternary structure, heterododecamer (2C3:3R2) of six catalytic PyrB chains organized as two trimers (C3), and six regulatory PyrI chains organized as three dimers (R2).

The enzyme catalyses carbamoyl phosphate + L-aspartate = N-carbamoyl-L-aspartate + phosphate + H(+). The protein operates within pyrimidine metabolism; UMP biosynthesis via de novo pathway; (S)-dihydroorotate from bicarbonate: step 2/3. In terms of biological role, catalyzes the condensation of carbamoyl phosphate and aspartate to form carbamoyl aspartate and inorganic phosphate, the committed step in the de novo pyrimidine nucleotide biosynthesis pathway. This chain is Aspartate carbamoyltransferase catalytic subunit, found in Nitrobacter hamburgensis (strain DSM 10229 / NCIMB 13809 / X14).